The primary structure comprises 457 residues: Probable ubiquitin carboxyl-terminal hydrolase 16 (457 aa).

The segment at 34-97 is disordered; sequence VSSPSVPEGT…DGANDFVDED (64 aa). Positions 45–67 are enriched in polar residues; the sequence is TVLNNPKQSTVSRKSFSAPTSPT. A Phosphoserine modification is found at Ser-61. Phosphothreonine is present on Thr-64. The residue at position 65 (Ser-65) is a Phosphoserine. Residues 125–429 enclose the USP domain; that stretch reads PGLVNLGNTC…QAYILQYKRK (305 aa). Cys-134 acts as the Nucleophile in catalysis. The active-site Proton acceptor is the His-388. The tract at residues 434–457 is disordered; that stretch reads SKHKLNTENTVTKTSNKKRRKISF. The segment covering 448–457 has biased composition (basic residues); that stretch reads SNKKRRKISF.

The protein belongs to the peptidase C19 family.

It catalyses the reaction Thiol-dependent hydrolysis of ester, thioester, amide, peptide and isopeptide bonds formed by the C-terminal Gly of ubiquitin (a 76-residue protein attached to proteins as an intracellular targeting signal).. The protein is Probable ubiquitin carboxyl-terminal hydrolase 16 (ubp16) of Schizosaccharomyces pombe (strain 972 / ATCC 24843) (Fission yeast).